A 124-amino-acid chain; its full sequence is MAVVKKRRNVVVGEVHIYATYNNVIVTIADQQGHVLVTTSAGACNFKGSKKATPYAAQETVARAVKAVVERNGMRTVSVCISGPGAGREAAIRAVQTCNLNVTSIRDTTKLPHNGCKLPKRRRV.

The protein belongs to the universal ribosomal protein uS11 family. As to quaternary structure, part of the 30S ribosomal subunit. Interacts with proteins S7 and S18. Binds to IF-3.

Its function is as follows. Located on the platform of the 30S subunit, it bridges several disparate RNA helices of the 16S rRNA. Forms part of the Shine-Dalgarno cleft in the 70S ribosome. The protein is Small ribosomal subunit protein uS11 of Anaplasma marginale (strain St. Maries).